The following is a 397-amino-acid chain: Anhydro-N-acetylmuramic acid kinase (397 aa).

Residue Gly-9 to Asp-16 participates in ATP binding.

Belongs to the anhydro-N-acetylmuramic acid kinase family.

It catalyses the reaction 1,6-anhydro-N-acetyl-beta-muramate + ATP + H2O = N-acetyl-D-muramate 6-phosphate + ADP + H(+). It functions in the pathway amino-sugar metabolism; 1,6-anhydro-N-acetylmuramate degradation. Its pathway is cell wall biogenesis; peptidoglycan recycling. In terms of biological role, catalyzes the specific phosphorylation of 1,6-anhydro-N-acetylmuramic acid (anhMurNAc) with the simultaneous cleavage of the 1,6-anhydro ring, generating MurNAc-6-P. Is required for the utilization of anhMurNAc either imported from the medium or derived from its own cell wall murein, and thus plays a role in cell wall recycling. The sequence is that of Anhydro-N-acetylmuramic acid kinase from Rhodococcus erythropolis (strain PR4 / NBRC 100887).